The sequence spans 163 residues: MKKTMMAAALVLSALSIQSALAAEYSEKTQYLGVVNGQVVGNSVVKVTRTPTDPVLYRSGSNSPLPAELIIRHAESRPASGGLANITVKEALPDNGEARITLKTSLMVDGKRVALSARQQGEDVVITVPEAQQQIELRTDAPAELEVPVSYRGNLQIALQVED.

An N-terminal signal peptide occupies residues 1-22 (MKKTMMAAALVLSALSIQSALA).

The protein resides in the fimbrium. In terms of biological role, K88 minor fimbrial subunit, plays an essential role in the biogenesis of the K88 fimbriae. required at some step in the initiation and/or elongation of the K88 fimbriae. In Escherichia coli, this protein is K88 minor fimbrial subunit FaeF (faeF).